The primary structure comprises 1025 residues: DNA ligase 4 (1025 aa).

The disordered stretch occupies residues 1–36 (MMQPTPAPSSAPGSPQRTQAEPEMETPSYPQPPQNV). ATP-binding residues include Glu289, Lys291, Leu292, Arg296, Glu349, Phe387, Glu447, Lys452, Lys469, and Lys471. The active-site N6-AMP-lysine intermediate is Lys291. Residue Glu349 participates in Mg(2+) binding. Glu447 provides a ligand contact to Mg(2+). One can recognise a BRCT 1 domain in the interval 667–763 (VKTDIFNGMK…EPAPFKKKYF (97 aa)). A disordered region spans residues 773–904 (ADEYNEDDGE…TTPDVDGDVK (132 aa)). Composition is skewed to acidic residues over residues 775–785 (EYNEDDGEEEG) and 806–816 (SETEDEDEEQA). Residues 817 to 838 (PEIKEEQDGELHEWLKVDDRKS) are compositionally biased toward basic and acidic residues. The span at 845–870 (DEEDSVTEDDSDNADVADEEEPDLDD) shows a compositional bias: acidic residues. Positions 891–904 (RHRETTPDVDGDVK) are enriched in basic and acidic residues. One can recognise a BRCT 2 domain in the interval 915–1025 (DPDVIFKHLC…TLLDEEGESF (111 aa)).

Belongs to the ATP-dependent DNA ligase family. Mg(2+) serves as cofactor.

Its subcellular location is the nucleus. The enzyme catalyses ATP + (deoxyribonucleotide)n-3'-hydroxyl + 5'-phospho-(deoxyribonucleotide)m = (deoxyribonucleotide)n+m + AMP + diphosphate.. Functionally, DNA ligase involved in DNA non-homologous end joining (NHEJ); required for double-strand break (DSB) repair. This Coprinopsis cinerea (strain Okayama-7 / 130 / ATCC MYA-4618 / FGSC 9003) (Inky cap fungus) protein is DNA ligase 4 (LIG4).